Reading from the N-terminus, the 312-residue chain is UDP-N-acetylenolpyruvoylglucosamine reductase (312 aa).

Positions 24 to 206 (GIGGPADLFA…SADILKVRNE (183 aa)) constitute an FAD-binding PCMH-type domain. Arg166 is a catalytic residue. Catalysis depends on Ser217, which acts as the Proton donor. Glu307 is a catalytic residue.

Belongs to the MurB family. FAD is required as a cofactor.

The protein localises to the cytoplasm. It carries out the reaction UDP-N-acetyl-alpha-D-muramate + NADP(+) = UDP-N-acetyl-3-O-(1-carboxyvinyl)-alpha-D-glucosamine + NADPH + H(+). It participates in cell wall biogenesis; peptidoglycan biosynthesis. Cell wall formation. The polypeptide is UDP-N-acetylenolpyruvoylglucosamine reductase (Solibacter usitatus (strain Ellin6076)).